An 828-amino-acid chain; its full sequence is Periplasmic nitrate reductase (828 aa).

The segment at residues 1 to 31 is a signal peptide (tat-type signal); it reads MKLSRRSFMKANAVAAAAAAAGLSVPGVARA. The 57-residue stretch at 39–95 folds into the 4Fe-4S Mo/W bis-MGD-type domain; it reads IKWDKAPCRFCGTGCGVLVGTQQGRIVACQGDPDAPVNRGLNCIKGYFLPKIMYGKD. [4Fe-4S] cluster contacts are provided by Cys46, Cys49, Cys53, and Cys81. Residues Lys83, Gln150, Asn175, Cys179, 212–219, 243–247, 262–264, Met372, Gln376, Asn482, 508–509, Lys531, Asp558, and 718–727 each bind Mo-bis(molybdopterin guanine dinucleotide); these read WGSNMAEM, STFQH, QSD, SD, and TGRVLEHWHT. Phe794 is a substrate binding site. Residues Asn802 and Lys819 each contribute to the Mo-bis(molybdopterin guanine dinucleotide) site.

It belongs to the prokaryotic molybdopterin-containing oxidoreductase family. NasA/NapA/NarB subfamily. Component of the periplasmic nitrate reductase NapAB complex composed of NapA and NapB. Requires [4Fe-4S] cluster as cofactor. Mo-bis(molybdopterin guanine dinucleotide) serves as cofactor. Post-translationally, predicted to be exported by the Tat system. The position of the signal peptide cleavage has not been experimentally proven.

It localises to the periplasm. The enzyme catalyses 2 Fe(II)-[cytochrome] + nitrate + 2 H(+) = 2 Fe(III)-[cytochrome] + nitrite + H2O. Catalytic subunit of the periplasmic nitrate reductase complex NapAB. Receives electrons from NapB and catalyzes the reduction of nitrate to nitrite. The protein is Periplasmic nitrate reductase of Citrobacter koseri (strain ATCC BAA-895 / CDC 4225-83 / SGSC4696).